We begin with the raw amino-acid sequence, 146 residues long: Hemoglobin subunit beta (146 aa).

Valine 1 carries the N-acetylvaline modification. In terms of domain architecture, Globin spans histidine 2–histidine 146. Residue threonine 12 is modified to Phosphothreonine. Serine 44 is subject to Phosphoserine. At lysine 59 the chain carries N6-acetyllysine. Histidine 63 contacts heme b. At lysine 82 the chain carries N6-acetyllysine. Histidine 92 lines the heme b pocket. Cysteine 93 carries the post-translational modification S-nitrosocysteine. N6-acetyllysine is present on lysine 144.

Belongs to the globin family. In terms of assembly, heterotetramer of two alpha chains and two beta chains. Red blood cells.

Functionally, involved in oxygen transport from the lung to the various peripheral tissues. This is Hemoglobin subunit beta (HBB) from Suncus murinus (Asian house shrew).